Consider the following 417-residue polypeptide: Acetyltransferase cdmC (417 aa).

The N-linked (GlcNAc...) asparagine glycan is linked to N64. Transmembrane regions (helical) follow at residues 308 to 328 (IPDG…GYLV), 357 to 377 (GIFW…YPLL), and 389 to 409 (LVES…AFIL).

The protein belongs to the wax synthase family.

It is found in the membrane. The enzyme catalyses chrodrimanin A + acetyl-CoA = chrodrimanin B + CoA. It functions in the pathway secondary metabolite biosynthesis; terpenoid biosynthesis. In terms of biological role, acetyltransferase; part of the gene cluster that mediates the biosynthesis of chrodrimanin B, a meroterpenoid that acts as a potent blocker of insect GABA-gated chloride channels. The first step of the pathway is the biosynthesis of 6-hydroxymellein by the polyketide synthase cdmE. The prenyltransferase cdmH acts as a 6-hydroxymellein 5-farnesyltransferase and produces the hydrophobic metabolite verruculide C. The FAD-dependent monooxygenase cdmI further converts verruculide C into verruculide B. The terpene cyclase cdmG then produced the pentacyclic molecule 3-hydroxypentacecilide A, the backbone structure of chrodrimanin B, via folding the farnesyl moiety of the substrate into the chair-boat conformation. The short-chain dehydrogenase/reductase cdmF functions as the 3-OH dehydrogenase that oxidizes the C-3 hydroxyl group of 3-hydroxypentacecilide A and produces chrodrimanin C, the dehydrogenated product of 3-hydroxypentacecilide A. The cytochrome P450 monooxygenase cdmJ then accepts both 3-hydroxypentacecilide A and chrodrimanin C and functions as a C-7-beta-hydroxylase to produce respectively chrodrimanin H and chrodrimanin F. The dioxygenase cdmA accepts chrodrimanin H to afford chrodrimanin E, which is further transformed to chrodrimanin A by the dioxygenase cdmD. CdmA can also accept chrodrimanin C as substrate to convert it into verruculide A, which is further converted into chrodrimanin T by cdmD. The last step of the biosynthesis is proposed to be performed by the acetyltransferase cdmC which acetylates chrodrimanin A to yield chrodrimanin B. The pathway may also lead to the production of additional shunt products, including chrodrimanins T and U. This chain is Acetyltransferase cdmC, found in Talaromyces verruculosus (Penicillium verruculosum).